A 159-amino-acid polypeptide reads, in one-letter code: Large ribosomal subunit protein uL15 (159 aa).

The span at 1–18 (MKLNEIKDNEGSSKDRIR) shows a compositional bias: basic and acidic residues. The disordered stretch occupies residues 1–39 (MKLNEIKDNEGSSKDRIRVGRGIGSGKGKTGGRGVKGQK). Positions 21–35 (RGIGSGKGKTGGRGV) are enriched in gly residues.

It belongs to the universal ribosomal protein uL15 family. Part of the 50S ribosomal subunit.

Functionally, binds to the 23S rRNA. This Allorhizobium ampelinum (strain ATCC BAA-846 / DSM 112012 / S4) (Agrobacterium vitis (strain S4)) protein is Large ribosomal subunit protein uL15.